Consider the following 323-residue polypeptide: tRNA dimethylallyltransferase (323 aa).

13–20 serves as a coordination point for ATP; that stretch reads GPTASGKT. Residue 15–20 participates in substrate binding; the sequence is TASGKT. 4 interaction with substrate tRNA regions span residues 42–45, 166–170, 251–256, and 284–291; these read DSAL, QRIQR, RCVGYR, and KRQITWLR.

It belongs to the IPP transferase family. As to quaternary structure, monomer. Mg(2+) serves as cofactor.

It catalyses the reaction adenosine(37) in tRNA + dimethylallyl diphosphate = N(6)-dimethylallyladenosine(37) in tRNA + diphosphate. Its function is as follows. Catalyzes the transfer of a dimethylallyl group onto the adenine at position 37 in tRNAs that read codons beginning with uridine, leading to the formation of N6-(dimethylallyl)adenosine (i(6)A). This chain is tRNA dimethylallyltransferase, found in Acidovorax sp. (strain JS42).